The sequence spans 322 residues: Phosphatidylserine decarboxylase proenzyme (322 aa).

Catalysis depends on charge relay system; for autoendoproteolytic cleavage activity residues Asp90, His147, and Ser254. Ser254 acts as the Schiff-base intermediate with substrate; via pyruvic acid; for decarboxylase activity in catalysis. Ser254 carries the pyruvic acid (Ser); by autocatalysis modification. The tract at residues 292–322 (TPDAEPSPLPAEEIEAEHDASPLVDDKKDQV) is disordered. Residues 308 to 322 (EHDASPLVDDKKDQV) are compositionally biased toward basic and acidic residues.

It belongs to the phosphatidylserine decarboxylase family. PSD-B subfamily. Prokaryotic type I sub-subfamily. As to quaternary structure, heterodimer of a large membrane-associated beta subunit and a small pyruvoyl-containing alpha subunit. Pyruvate serves as cofactor. In terms of processing, is synthesized initially as an inactive proenzyme. Formation of the active enzyme involves a self-maturation process in which the active site pyruvoyl group is generated from an internal serine residue via an autocatalytic post-translational modification. Two non-identical subunits are generated from the proenzyme in this reaction, and the pyruvate is formed at the N-terminus of the alpha chain, which is derived from the carboxyl end of the proenzyme. The autoendoproteolytic cleavage occurs by a canonical serine protease mechanism, in which the side chain hydroxyl group of the serine supplies its oxygen atom to form the C-terminus of the beta chain, while the remainder of the serine residue undergoes an oxidative deamination to produce ammonia and the pyruvoyl prosthetic group on the alpha chain. During this reaction, the Ser that is part of the protease active site of the proenzyme becomes the pyruvoyl prosthetic group, which constitutes an essential element of the active site of the mature decarboxylase.

It localises to the cell membrane. The catalysed reaction is a 1,2-diacyl-sn-glycero-3-phospho-L-serine + H(+) = a 1,2-diacyl-sn-glycero-3-phosphoethanolamine + CO2. The protein operates within phospholipid metabolism; phosphatidylethanolamine biosynthesis; phosphatidylethanolamine from CDP-diacylglycerol: step 2/2. Functionally, catalyzes the formation of phosphatidylethanolamine (PtdEtn) from phosphatidylserine (PtdSer). This Escherichia coli O7:K1 (strain IAI39 / ExPEC) protein is Phosphatidylserine decarboxylase proenzyme.